We begin with the raw amino-acid sequence, 198 residues long: Ribonuclease HII (198 aa).

An RNase H type-2 domain is found at 3 to 198 (LSVGGIDEAG…SWETVGKLFK (196 aa)). Positions 9, 10, and 104 each coordinate a divalent metal cation.

This sequence belongs to the RNase HII family. It depends on Mn(2+) as a cofactor. Mg(2+) is required as a cofactor.

The protein localises to the cytoplasm. The enzyme catalyses Endonucleolytic cleavage to 5'-phosphomonoester.. In terms of biological role, endonuclease that specifically degrades the RNA of RNA-DNA hybrids. This Pyrobaculum arsenaticum (strain DSM 13514 / JCM 11321 / PZ6) protein is Ribonuclease HII.